The primary structure comprises 266 residues: Undecaprenyl-diphosphatase (266 aa).

The next 7 membrane-spanning stretches (helical) occupy residues 39 to 59 (PGSS…VWYF), 86 to 106 (SIFI…LFVP), 112 to 132 (VLRS…FMYL), 153 to 173 (LIGF…GITI), 189 to 209 (FSFL…FIFS), 216 to 236 (IGFL…LLAI), and 246 to 266 (NGLK…LLNL).

The protein belongs to the UppP family.

The protein resides in the cell inner membrane. It carries out the reaction di-trans,octa-cis-undecaprenyl diphosphate + H2O = di-trans,octa-cis-undecaprenyl phosphate + phosphate + H(+). Its function is as follows. Catalyzes the dephosphorylation of undecaprenyl diphosphate (UPP). Confers resistance to bacitracin. In Prochlorococcus marinus (strain MIT 9215), this protein is Undecaprenyl-diphosphatase.